The following is a 148-amino-acid chain: 3-dehydroquinate dehydratase (148 aa).

Tyrosine 23 functions as the Proton acceptor in the catalytic mechanism. Asparagine 75, histidine 81, and aspartate 88 together coordinate substrate. Catalysis depends on histidine 101, which acts as the Proton donor. Residues 102–103 (LS) and arginine 112 contribute to the substrate site.

Belongs to the type-II 3-dehydroquinase family. In terms of assembly, homododecamer.

The catalysed reaction is 3-dehydroquinate = 3-dehydroshikimate + H2O. It functions in the pathway metabolic intermediate biosynthesis; chorismate biosynthesis; chorismate from D-erythrose 4-phosphate and phosphoenolpyruvate: step 3/7. Its function is as follows. Catalyzes a trans-dehydration via an enolate intermediate. This Ectopseudomonas mendocina (strain ymp) (Pseudomonas mendocina) protein is 3-dehydroquinate dehydratase.